The primary structure comprises 38 residues: Alpha-conotoxin PeIA (38 aa).

The propeptide occupies 1 to 21 (FDGRNAAANDKASDLVALTVR). Intrachain disulfides connect C23–C29 and C24–C37. Positions 25–27 (SHP) are ser-Xaa-Pro motif, crucial for potent interaction with nAChR. Position 37 is a cysteine amide (C37).

Belongs to the conotoxin A superfamily. In terms of processing, the hydroxylation at position Pro-27 is critical, since an hydroxylation at this position decreases potency of the toxin to inhibit both alpha-3-beta-2 (1300-fold) and alpha-6/alpha-3-beta-2-beta-3 (130-fold) nAChRs. A non-modified residue at position Pro-34 is critical, since a hydroxylation at this position decreases potency of the toxin to inhibit alpha-3-beta-2 (1-45-fold) and increases potency to inhibit alpha-6/alpha-3-beta-2-beta-3 (1.77-fold) nAChRs. Expressed by the venom duct.

Its subcellular location is the secreted. In terms of biological role, alpha-conotoxins act on postsynaptic membranes, they bind to the nicotinic acetylcholine receptors (nAChR) and thus inhibit them. This synthetic peptide potently and reversibly blocks alpha-9-alpha-10/CHRNA9-CHRNA10 nAChR (IC(50)=6.9-54.9 nM), alpha-3-beta-2/CHRNA3-CHRNB2 (IC(50)=9.7-97.5 nM) and alpha-6/alpha-3-beta-2-beta-3 (CHRNA6/CHRNA3-CHRNB2-CHRNB3) (IC(50)=11.1-17.2 nM). It also inhibits alpha-6/alpha-3-beta-4 (CHRNA6/CHRNA3-CHRNB4) nAChR with a higher potency on human (IC(50)=6.75 nM) than on rat receptors (IC(50)=130-147 nM). Also shows a weak ability to inhibit alpha-3-beta-4/CHRNA3-CHRNB4 (IC(50)=480-1500 nM). This synthetic toxin also inhibits N-type calcium channels (Ca2.2/CACNA1B) (IC(50)=1.1 nM) via the activation of the G protein-coupled GABA(B) receptor in DRG neurons. Also exhibits inhibition of D.melanogaster alpha-7/CHRNA7 nAChRs. This Conus pergrandis (Grand cone) protein is Alpha-conotoxin PeIA.